Consider the following 319-residue polypeptide: Acetyl-coenzyme A carboxylase carboxyl transferase subunit alpha (319 aa).

Positions 38–292 (ALDKKAADLL…GKAIASMLAG (255 aa)) constitute a CoA carboxyltransferase C-terminal domain.

Belongs to the AccA family. In terms of assembly, acetyl-CoA carboxylase is a heterohexamer composed of biotin carboxyl carrier protein (AccB), biotin carboxylase (AccC) and two subunits each of ACCase subunit alpha (AccA) and ACCase subunit beta (AccD).

The protein localises to the cytoplasm. It carries out the reaction N(6)-carboxybiotinyl-L-lysyl-[protein] + acetyl-CoA = N(6)-biotinyl-L-lysyl-[protein] + malonyl-CoA. Its pathway is lipid metabolism; malonyl-CoA biosynthesis; malonyl-CoA from acetyl-CoA: step 1/1. In terms of biological role, component of the acetyl coenzyme A carboxylase (ACC) complex. First, biotin carboxylase catalyzes the carboxylation of biotin on its carrier protein (BCCP) and then the CO(2) group is transferred by the carboxyltransferase to acetyl-CoA to form malonyl-CoA. The chain is Acetyl-coenzyme A carboxylase carboxyl transferase subunit alpha from Jannaschia sp. (strain CCS1).